We begin with the raw amino-acid sequence, 117 residues long: Large ribosomal subunit protein bL20 (117 aa).

This sequence belongs to the bacterial ribosomal protein bL20 family.

Binds directly to 23S ribosomal RNA and is necessary for the in vitro assembly process of the 50S ribosomal subunit. It is not involved in the protein synthesizing functions of that subunit. This chain is Large ribosomal subunit protein bL20, found in Acetivibrio thermocellus (strain ATCC 27405 / DSM 1237 / JCM 9322 / NBRC 103400 / NCIMB 10682 / NRRL B-4536 / VPI 7372) (Clostridium thermocellum).